Consider the following 22-residue polypeptide: Mu-conotoxin SxIIIA (22 aa).

Intrachain disulfides connect Cys-2–Cys-15, Cys-3–Cys-20, and Cys-10–Cys-21. Alanine amide is present on Ala-22.

It belongs to the conotoxin M superfamily. In terms of tissue distribution, expressed by the venom duct.

The protein resides in the secreted. Functionally, mu-conotoxins block voltage-gated sodium channels (Nav). This synthetic toxin potently blocks rNav1.4/SCN4A (IC(50)= 7 nM). It also moderately blocks rNav1.1/SCN1A (IC(50)=370 nM), rNav1.2/SCN2A (IC(50)=1 uM), and mNav1.6/SCN6A (IC(50)=570 nM). It is noteworthy that coexpression of subunits beta-2 or beta-4 (but not beta-1 or beta-3) decrease by more that 10-fold the binding potency of the toxin to rNav1.6. It is also noteworthy that the toxin is 50-fold more potent on mouse Nav1.6 than on rat Nav1.6. In vivo, when injected intraperitoneally or subcutaneously in mice, causes motor impairment, paralysis and death. The polypeptide is Mu-conotoxin SxIIIA (Conus striolatus (Cone snail)).